We begin with the raw amino-acid sequence, 865 residues long: Alanine--tRNA ligase (865 aa).

4 residues coordinate Zn(2+): His-554, His-558, Cys-656, and His-660.

It belongs to the class-II aminoacyl-tRNA synthetase family. Requires Zn(2+) as cofactor.

It localises to the cytoplasm. The enzyme catalyses tRNA(Ala) + L-alanine + ATP = L-alanyl-tRNA(Ala) + AMP + diphosphate. Catalyzes the attachment of alanine to tRNA(Ala) in a two-step reaction: alanine is first activated by ATP to form Ala-AMP and then transferred to the acceptor end of tRNA(Ala). Also edits incorrectly charged Ser-tRNA(Ala) and Gly-tRNA(Ala) via its editing domain. This is Alanine--tRNA ligase from Francisella tularensis subsp. novicida (strain U112).